The following is a 955-amino-acid chain: Glycine dehydrogenase (decarboxylating) (955 aa).

Lysine 702 is subject to N6-(pyridoxal phosphate)lysine.

This sequence belongs to the GcvP family. As to quaternary structure, the glycine cleavage system is composed of four proteins: P, T, L and H. Pyridoxal 5'-phosphate is required as a cofactor.

The enzyme catalyses N(6)-[(R)-lipoyl]-L-lysyl-[glycine-cleavage complex H protein] + glycine + H(+) = N(6)-[(R)-S(8)-aminomethyldihydrolipoyl]-L-lysyl-[glycine-cleavage complex H protein] + CO2. Its function is as follows. The glycine cleavage system catalyzes the degradation of glycine. The P protein binds the alpha-amino group of glycine through its pyridoxal phosphate cofactor; CO(2) is released and the remaining methylamine moiety is then transferred to the lipoamide cofactor of the H protein. The chain is Glycine dehydrogenase (decarboxylating) from Stenotrophomonas maltophilia (strain K279a).